We begin with the raw amino-acid sequence, 130 residues long: Small ribosomal subunit protein uS8 (130 aa).

This sequence belongs to the universal ribosomal protein uS8 family. As to quaternary structure, part of the 30S ribosomal subunit.

Functionally, one of the primary rRNA binding proteins, it binds directly to 16S rRNA central domain where it helps coordinate assembly of the platform of the 30S subunit. In Methanosphaerula palustris (strain ATCC BAA-1556 / DSM 19958 / E1-9c), this protein is Small ribosomal subunit protein uS8.